The chain runs to 197 residues: Large ribosomal subunit protein uL10 (197 aa).

Positions 162–197 (GGASAPAAEEAPAAEEAAAEEVAAPAEAAEAATEEN) are disordered. A compositionally biased stretch (low complexity) spans 163–197 (GASAPAAEEAPAAEEAAAEEVAAPAEAAEAATEEN).

The protein belongs to the universal ribosomal protein uL10 family. In terms of assembly, part of the ribosomal stalk of the 50S ribosomal subunit. The N-terminus interacts with L11 and the large rRNA to form the base of the stalk. The C-terminus forms an elongated spine to which L12 dimers bind in a sequential fashion forming a multimeric L10(L12)X complex.

Functionally, forms part of the ribosomal stalk, playing a central role in the interaction of the ribosome with GTP-bound translation factors. This is Large ribosomal subunit protein uL10 from Paenarthrobacter aurescens (strain TC1).